Here is a 294-residue protein sequence, read N- to C-terminus: Small ribosomal subunit protein uS2 (294 aa).

The span at 256 to 274 shows a compositional bias: basic and acidic residues; the sequence is SGKFIMDEDPDSKKTKTAE. The tract at residues 256-294 is disordered; the sequence is SGKFIMDEDPDSKKTKTAEEPSATIEPSTTTTVEVDQNE. Over residues 280 to 294 the composition is skewed to polar residues; the sequence is IEPSTTTTVEVDQNE.

Belongs to the universal ribosomal protein uS2 family.

The sequence is that of Small ribosomal subunit protein uS2 from Leptospira interrogans serogroup Icterohaemorrhagiae serovar Lai (strain 56601).